Here is an 811-residue protein sequence, read N- to C-terminus: MSDQPPPYTPLPLLSSFPPNPYPDQTPDPASTPTLVLPNPAFPNKRKRTGFRRKLPSGSPAAPVAVAASPSAQPPPRASAADDIIVINREPTAEAVTALTAGFPADSLTDEEIEAGVVSDVGGIEQVNYILIRNHLLTRWRETFNSWLAKESFATLIPPHCDHLLNAAYSFLVSHGHINFGVAPAIKERIPKEPTRHNTVIVVGAGLAGLAAARQLVAFGFKVVVLEGRKRCGGRVYTKKMEGGGRSAAGDLGGSVLTGTFGNPLGIVAKQLGLPMHKIRDKCPLYRPDGSPVDPEVDKKVEGTFNKLLDKSSLLRASMGDVAMDVSLGAALETLRQTDGDLSTDQEMNLFNWHLANLEYANAGLLSKLSLAFWDQDDPYDMVGDHCFLPGGNGRLVQSLAENVPIVYERTVHTIRYGGDGVQVVVNGGQVYEGDMALCTVPLGVLKNGGVKFVPELPQRKLDSIKRLGFGLLNKVAMLFPHVFWSTDLDTFGHLTEDPSHRGEFFLFYSYATVAGGPLLMALVAGEAAHNFETTPPTDAVSSVLKILRGIYEPQGIEVPDPLQSVCTRWGTDSFSLGSYSHVAVGASGDDYDILAESVGDGRLFFAGEATTRRYPATMHGAFISGLREAANITLHANARAAKSKVEKGPSTNTQACAALLMDLFRQPDLEFGSFSVIFGGQASDPKSPAILKVELGGPRKKGATEGGKADQHHSNKLLFQQLQSHFNQQQQLYVYTLLSRQQAMELREVRGGDEMRLHYLCEKLGVKLVGRKGLGPGADAVIASIKAERNSSRTKTRPSKLKIGIPKSKS.

A compositionally biased stretch (pro residues) spans 1–10 (MSDQPPPYTP). Residues 1 to 79 (MSDQPPPYTP…PSAQPPPRAS (79 aa)) form a disordered region. The span at 44–55 (NKRKRTGFRRKL) shows a compositional bias: basic residues. The span at 56–71 (PSGSPAAPVAVAASPS) shows a compositional bias: low complexity. The region spanning 88–189 (NREPTAEAVT…FGVAPAIKER (102 aa)) is the SWIRM domain. FAD is bound by residues Glu227, Arg229, Arg235, and Glu609. Residues 790–811 (RNSSRTKTRPSKLKIGIPKSKS) are disordered.

The protein belongs to the flavin monoamine oxidase family. The cofactor is FAD.

In terms of biological role, probable histone demethylase. The sequence is that of Lysine-specific histone demethylase 1 homolog 3 from Oryza sativa subsp. japonica (Rice).